We begin with the raw amino-acid sequence, 219 residues long: RNA-free ribonuclease P (219 aa).

Belongs to the HARP family.

It catalyses the reaction Endonucleolytic cleavage of RNA, removing 5'-extranucleotides from tRNA precursor.. In terms of biological role, RNA-free RNase P that catalyzes the removal of the 5'-leader sequence from pre-tRNA to produce the mature 5'-terminus. This chain is RNA-free ribonuclease P, found in Staphylothermus marinus (strain ATCC 43588 / DSM 3639 / JCM 9404 / F1).